The primary structure comprises 436 residues: Cold sensitive U2 snRNA suppressor 1 (436 aa).

Residues 1-10 show a composition bias toward basic residues; that stretch reads MARTKSRKRS. The tract at residues 1-22 is disordered; the sequence is MARTKSRKRSGNNQNKNASVVN. Residues 12–22 show a composition bias toward low complexity; it reads NNQNKNASVVN. 2 positions are modified to phosphothreonine: Thr104 and Thr112. Ser114 carries the post-translational modification Phosphoserine. A disordered region spans residues 374-436; it reads EFENSKEDTQ…SEKQLYTVLK (63 aa). A compositionally biased stretch (basic and acidic residues) spans 389 to 408; the sequence is GRQDDKIDDEVEHKLDHFQE.

It to mammalian SAP 145. Some, to C.elegans ZK632.11. In terms of assembly, belongs to the CWC complex (or CEF1-associated complex), a spliceosome sub-complex reminiscent of a late-stage spliceosome composed of the U2, U5 and U6 snRNAs and at least BUD13, BUD31, BRR2, CDC40, CEF1, CLF1, CUS1, CWC2, CWC15, CWC21, CWC22, CWC23, CWC24, CWC25, CWC27, ECM2, HSH155, IST3, ISY1, LEA1, MSL1, NTC20, PRP8, PRP9, PRP11, PRP19, PRP21, PRP22, PRP45, PRP46, SLU7, SMB1, SMD1, SMD2, SMD3, SMX2, SMX3, SNT309, SNU114, SPP2, SYF1, SYF2, RSE1 and YJU2. Interacts with RDS3.

It localises to the nucleus. In terms of biological role, essential splicing protein required for U2 snRNP binding to pre-mRNA during spliceosome assembly. This is Cold sensitive U2 snRNA suppressor 1 (CUS1) from Saccharomyces cerevisiae (strain ATCC 204508 / S288c) (Baker's yeast).